Consider the following 291-residue polypeptide: Alpha-soluble NSF attachment protein (291 aa).

TPR repeat units lie at residues 14 to 51, 77 to 110, 117 to 150, and 157 to 190; these read ADKRLRGGNFFKMFGGGSSRYDDAASDYTKAANLFKMS, AASSYVLAAGCYKKGNVIDAITCLKAAIEYYTDE, AKHQKEIAELYEAEGDFDQAIASYQIASDYFDGE, and HQCLLKIALFSAQLERYEKSIEIYEQVAAASLDN.

Belongs to the SNAP family. In terms of assembly, interacts with nsfA and probably SNARE proteins.

The protein localises to the cytoplasmic vesicle membrane. May be required for vesicular transport between the endoplasmic reticulum and the Golgi apparatus. Involved in vesicle fusion with nsfA and probably SNARE proteins. The protein is Alpha-soluble NSF attachment protein (snpA) of Dictyostelium discoideum (Social amoeba).